The primary structure comprises 855 residues: Pre-mRNA-splicing factor SYF1 (855 aa).

9 HAT repeats span residues 15–47, 48–80, 90–122, 124–158, 160–192, 198–230, 235–268, 270–305, and 369–407; these read LVFE…FKQG, APKP…ARRA, PAYE…FLMD, GRVT…FLRS, PLPE…SSDR, QRLA…LISQ, VQSL…YYIR, GHFE…FEES, and GRPR…FYED. An N6-acetyllysine modification is found at Lys420. HAT repeat units lie at residues 498–530, 532–566, 571–605, 643–677, and 679–713; these read GTFQ…FLEE, KYFE…KFIS, RKLE…LEEE, YGVT…MECK, and GEID…FEVR. Residues 808 to 855 are disordered; the sequence is AELAQQANPEEIQLGEDEDEDEMDLEPNEVRLEQQSVPAAVFGSLKED. Residues 820–834 are compositionally biased toward acidic residues; the sequence is QLGEDEDEDEMDLEP. At Ser851 the chain carries Phosphoserine.

Belongs to the crooked-neck family. In terms of assembly, associates with RNA polymerase II, the TCR-specific proteins CKN1/CSA and ERCC6/CSB, and XPA. Identified in the spliceosome C complex. Component of the XAB2 complex, a multimeric protein complex composed of XAB2, PRPF19, AQR, ZNF830, ISY1, and PPIE. Identified in a pentameric intron-binding (IB) complex composed of AQR, XAB2, ISY1, ZNF830 and PPIE that is incorporated into the spliceosome as a preassembled complex. The IB complex does not contain PRPF19.

Its subcellular location is the nucleus. Involved in pre-mRNA splicing as component of the spliceosome. Involved in transcription-coupled repair (TCR), transcription and pre-mRNA splicing. This chain is Pre-mRNA-splicing factor SYF1 (Xab2), found in Rattus norvegicus (Rat).